A 103-amino-acid chain; its full sequence is MAAKIRQNDEVIVLAGKDKNKRGKVTKVLPNGKVIVEGINLITKHEKPVPALGKAGGLVKKEAAIDVSNVAIFNPTTNKADRVGFRFEDNKKVRFFKSNNEII.

Belongs to the universal ribosomal protein uL24 family. In terms of assembly, part of the 50S ribosomal subunit.

In terms of biological role, one of two assembly initiator proteins, it binds directly to the 5'-end of the 23S rRNA, where it nucleates assembly of the 50S subunit. Its function is as follows. One of the proteins that surrounds the polypeptide exit tunnel on the outside of the subunit. The protein is Large ribosomal subunit protein uL24 of Haemophilus ducreyi (strain 35000HP / ATCC 700724).